We begin with the raw amino-acid sequence, 209 residues long: Chloramphenicol acetyltransferase (209 aa).

Catalysis depends on His189, which acts as the Proton acceptor.

The protein belongs to the chloramphenicol acetyltransferase family. As to quaternary structure, homotrimer.

It carries out the reaction chloramphenicol + acetyl-CoA = chloramphenicol 3-acetate + CoA. This enzyme is an effector of chloramphenicol resistance in bacteria. The chain is Chloramphenicol acetyltransferase from Staphylococcus aureus.